Consider the following 171-residue polypeptide: Vimentin-type intermediate filament-associated coiled-coil protein (171 aa).

Residues Leu7–Gln98 adopt a coiled-coil conformation. The segment at Glu126–Val171 is disordered.

Expressed in brain, heart, kidney, liver, lung, skeletal muscle, spleen and testis. Within the kidney expression is pronounced within glomeruli.

The protein localises to the cytoplasm. The chain is Vimentin-type intermediate filament-associated coiled-coil protein (Vmac) from Rattus norvegicus (Rat).